The sequence spans 643 residues: Phosphatidylinositol-3,5-bisphosphate 3-phosphatase MTMR2 (643 aa).

Polar residues-rich tracts occupy residues 1-12 (MEKSSSCESLGS) and 23-40 (DSLS…VHTK). The disordered stretch occupies residues 1 to 56 (MEKSSSCESLGSQPAAARPPSVDSLSSASTSHSENSVHTKSASVVSSDSISTSADN). Residues Ser6 and Ser9 each carry the phosphoserine modification. Residues 41–55 (SASVVSSDSISTSAD) show a composition bias toward low complexity. Residue Ser58 is modified to Phosphoserine. The 72-residue stretch at 68–139 (NKLAEMEEPP…GVINRVEKIG (72 aa)) folds into the GRAM domain. The region spanning 205–580 (GWKLYDPLLE…RHLELWVGYY (376 aa)) is the Myotubularin phosphatase domain. Residues Asn330, Asn355, and Ile356 each coordinate a 1,2-diacyl-sn-glycero-3-phospho-(1D-myo-inositol-3,5-bisphosphate). Residues Asn330, Asn355, and Ile356 each contribute to the a 1,2-diacyl-sn-glycero-3-phospho-(1D-myo-inositol-3-phosphate) site. The active-site Phosphocysteine intermediate is Cys417. A 1,2-diacyl-sn-glycero-3-phospho-(1D-myo-inositol-3,5-bisphosphate) is bound by residues Ser418, Asp419, Gly420, Trp421, Asp422, Arg423, Arg459, and Arg463. A 1,2-diacyl-sn-glycero-3-phospho-(1D-myo-inositol-3-phosphate) is bound by residues Ser418, Asp419, Gly420, Trp421, Asp422, and Arg423. Arg463 contacts a 1,2-diacyl-sn-glycero-3-phospho-(1D-myo-inositol-3-phosphate). Residues 593 to 627 (IHNRYKELLAKRAELQKKVEELQREISNRSTSSSE) are a coiled coil. A disordered region spans residues 615 to 643 (QREISNRSTSSSERASSPAQCVTPVQTVV). A compositionally biased stretch (low complexity) spans 620–631 (NRSTSSSERASS). Over residues 632 to 643 (PAQCVTPVQTVV) the composition is skewed to polar residues.

Belongs to the protein-tyrosine phosphatase family. Non-receptor class myotubularin subfamily. As to quaternary structure, homodimer (via coiled-coil domain). Heterotetramer consisting of one MTMR2 dimer and one SBF2/MTMR13 dimer; specifically in peripheral nerves stabilizes SBF2/MTMR13 at the membranes and increases MTMR2 catalytic activity towards phosphatidylinositol 3,5-bisphosphate and to a lesser extent towards phosphatidylinositol 3-phosphate. Heterodimer with SBF1/MTMR5; acts as an adapter for the phosphatase MTMR2 to regulate MTMR2 catalytic activity and subcellular location. Heterodimer with MTMR12. Phosphorylation at Ser-58 decreases MTMR2 localization to endocytic vesicular structures.

It is found in the cytoplasm. The protein localises to the early endosome membrane. The protein resides in the perinuclear region. It localises to the cell projection. Its subcellular location is the axon. It is found in the endosome membrane. It carries out the reaction a 1,2-diacyl-sn-glycero-3-phospho-(1D-myo-inositol-3,5-bisphosphate) + H2O = a 1,2-diacyl-sn-glycero-3-phospho-(1D-myo-inositol-5-phosphate) + phosphate. It catalyses the reaction a 1,2-diacyl-sn-glycero-3-phospho-(1D-myo-inositol-3-phosphate) + H2O = a 1,2-diacyl-sn-glycero-3-phospho-(1D-myo-inositol) + phosphate. The enzyme catalyses 1,2-dioctanoyl-sn-glycero-3-phospho-(1-D-myo-inositol-3-phosphate) + H2O = 1,2-dioctanoyl-sn-glycero-3-phospho-(1D-myo-inositol) + phosphate. The catalysed reaction is 1,2-dioctanoyl-sn-glycero-3-phospho-(1D-myo-inositol-3,5-bisphosphate) + H2O = 1,2-dioctanoyl-sn-glycero-3-phospho-(1D-myo-inositol-5-phosphate) + phosphate. Functionally, lipid phosphatase that specifically dephosphorylates the D-3 position of phosphatidylinositol 3-phosphate and phosphatidylinositol 3,5-bisphosphate, generating phosphatidylinositol and phosphatidylinositol 5-phosphate. Regulates the level of these phosphoinositides critical for various biological processes including autophagy initiation and autophagosome maturation. This Homo sapiens (Human) protein is Phosphatidylinositol-3,5-bisphosphate 3-phosphatase MTMR2.